A 244-amino-acid chain; its full sequence is tRNA (guanine-N(7)-)-methyltransferase (244 aa).

The segment covering 1–10 has biased composition (polar residues); the sequence is MSDTPQSPAQ. Positions 1-20 are disordered; that stretch reads MSDTPQSPAQDSLAEHDEAR. S-adenosyl-L-methionine contacts are provided by glutamate 74, glutamate 99, aspartate 126, and aspartate 149. The active site involves aspartate 149. Residues lysine 153, aspartate 185, and 222–225 contribute to the substrate site; that span reads TKFE.

The protein belongs to the class I-like SAM-binding methyltransferase superfamily. TrmB family.

The catalysed reaction is guanosine(46) in tRNA + S-adenosyl-L-methionine = N(7)-methylguanosine(46) in tRNA + S-adenosyl-L-homocysteine. It participates in tRNA modification; N(7)-methylguanine-tRNA biosynthesis. Its function is as follows. Catalyzes the formation of N(7)-methylguanine at position 46 (m7G46) in tRNA. In Pseudomonas paraeruginosa (strain DSM 24068 / PA7) (Pseudomonas aeruginosa (strain PA7)), this protein is tRNA (guanine-N(7)-)-methyltransferase.